A 251-amino-acid chain; its full sequence is 1-(5-phosphoribosyl)-5-[(5-phosphoribosylamino)methylideneamino] imidazole-4-carboxamide isomerase (251 aa).

Asp8 functions as the Proton acceptor in the catalytic mechanism. Asp131 (proton donor) is an active-site residue.

This sequence belongs to the HisA/HisF family.

The protein resides in the cytoplasm. It catalyses the reaction 1-(5-phospho-beta-D-ribosyl)-5-[(5-phospho-beta-D-ribosylamino)methylideneamino]imidazole-4-carboxamide = 5-[(5-phospho-1-deoxy-D-ribulos-1-ylimino)methylamino]-1-(5-phospho-beta-D-ribosyl)imidazole-4-carboxamide. Its pathway is amino-acid biosynthesis; L-histidine biosynthesis; L-histidine from 5-phospho-alpha-D-ribose 1-diphosphate: step 4/9. This Azoarcus sp. (strain BH72) protein is 1-(5-phosphoribosyl)-5-[(5-phosphoribosylamino)methylideneamino] imidazole-4-carboxamide isomerase.